The chain runs to 373 residues: Transcription factor NF-E2 45 kDa subunit (373 aa).

The tract at residues 1–83 is required for interaction with MAPK8; it reads MSPCPPQQSR…SGFPLPPPPY (83 aa). A transactivation domain region spans residues 1–206; sequence MSPCPPQQSR…PAAETPLALE (206 aa). Short sequence motifs (PXY motif) lie at residues 61–65 and 79–83; these read PPTTY and PPPPY. The tract at residues 127 to 150 is disordered; it reads LDIGLPAGPPKPQEDPESDSGLSL. Ser-157 carries the phosphoserine; by MAPK8 modification. Ser-170 carries the post-translational modification Phosphoserine; by PKA. A disordered region spans residues 205 to 226; sequence LEPSSGPVRAKPTARGEAGSRD. The 64-residue stretch at 266–329 folds into the bZIP domain; it reads LVRDIRRRGK…EVMRQQLTEL (64 aa). Residues 268 to 287 form a basic motif region; sequence RDIRRRGKNKVAAQNCRKRK. Positions 291 to 298 are leucine-zipper; sequence IVQLEREL. Residue Lys-368 forms a Glycyl lysine isopeptide (Lys-Gly) (interchain with G-Cter in SUMO1) linkage.

It belongs to the bZIP family. CNC subfamily. As to quaternary structure, homodimer; can bind DNA as a homodimer. Erythroid transcription activator nuclear factor erythroid-derived 2 (NF-E2), composed of a heterodimer of NFE2 and MAFK, possesses transactivation activity on beta-globin. Also forms high affinity heterodimer with MAFG; the interaction promotes erythropoiesis. Interacts (via the PXY motif 1) with ITCH (via the WW 1 domain); the interaction promotes 'Lys63'-linked ubiquitination of NFE2, translocates it to the cytoplasm and inhibits its transactivation activity. Interacts with KMT2D/MLL2; the interaction promotes transactivation of the beta-globin locus. Interacts with MAPK8 (phosphorylated form); the interaction leads to phosphorylation of NFE2 in undifferentiated cells. Phosphorylated on serine residues. In undifferentiated erythrocytes, phosphorylated by MAPK8 which then leads to ubiquitination and protein degradation. In terms of processing, sumoylated. Sumoylation is required for translocation to nuclear bodies PODs, anchoring to the gene loci, and transactivation of the beta-globin gene. Post-translationally, ubiquitinated mainly by 'Lys63'-linked ubiquitin. Polyubiquitination with 'Lys63'-linked ubiquitin by ITCH retains NFE2 in the cytoplasm preventing its transactivation activity. In undifferentiated erythrocyte, ubiquitinated after MAPK8-mediatd phosphorylation leading to protein degradation. In terms of tissue distribution, expressed in hematopoietic cells and also in colon and testis.

It localises to the nucleus. The protein localises to the PML body. It is found in the cytoplasm. In terms of biological role, component of the NF-E2 complex essential for regulating erythroid and megakaryocytic maturation and differentiation. Binds to the hypersensitive site 2 (HS2) of the beta-globin control region (LCR). This subunit (NFE2) recognizes the TCAT/C sequence of the AP-1-like core palindrome present in a number of erythroid and megakaryocytic gene promoters. Requires MAFK or other small MAF proteins for binding to the NF-E2 motif. May play a role in all aspects of hemoglobin production from globin and heme synthesis to procurement of iron. The sequence is that of Transcription factor NF-E2 45 kDa subunit (NFE2) from Homo sapiens (Human).